The sequence spans 47 residues: MAKGKRTFQPNNRRRARVHGFRLRMRTRAGRAIVSGRRRKGRRALSA.

Belongs to the bacterial ribosomal protein bL34 family.

The protein is Large ribosomal subunit protein bL34 of Mycobacterium avium (strain 104).